The sequence spans 226 residues: PKHD-type hydroxylase Nwi_0701 (226 aa).

The 101-residue stretch at 78–178 folds into the Fe2OG dioxygenase domain; the sequence is KVLPPRFNRY…RLAAFFWTQS (101 aa). The Fe cation site is built by His-96, Asp-98, and His-159. Arg-169 contacts 2-oxoglutarate.

The cofactor is Fe(2+). L-ascorbate is required as a cofactor.

The protein is PKHD-type hydroxylase Nwi_0701 of Nitrobacter winogradskyi (strain ATCC 25391 / DSM 10237 / CIP 104748 / NCIMB 11846 / Nb-255).